The chain runs to 607 residues: Tyrosine-protein kinase RYK (607 aa).

The interval 1–20 is disordered; it reads MRGAARLGRPGRSCLPGARG. The first 25 residues, 1 to 25, serve as a signal peptide directing secretion; sequence MRGAARLGRPGRSCLPGARGLRAPP. Residues 26-227 lie on the Extracellular side of the membrane; it reads PPPLLLLLAL…VHAAPTTSTR (202 aa). A WIF domain is found at 66–194; sequence LYLSEDEVRR…VLNFKRRKMC (129 aa). 5 N-linked (GlcNAc...) asparagine glycosylation sites follow: Asn139, Asn174, Asn178, Asn182, and Asn209. Residues Cys159 and Cys194 are joined by a disulfide bond. The helical transmembrane segment at 228–248 threads the bilayer; that stretch reads VFYISVGVCCAVIFLVAIILA. Residues 249 to 607 are Cytoplasmic-facing; that stretch reads VLHLHSMKRI…EFHAALGAYV (359 aa). Residues 266–282 are compositionally biased toward low complexity; it reads ASSSSQGLSQPSTQTTQ. The segment at 266-290 is disordered; the sequence is ASSSSQGLSQPSTQTTQYLRADTPN. The 274-residue stretch at 330 to 603 folds into the Protein kinase domain; sequence ITLKDVLQEG…QCLTEFHAAL (274 aa). Residues 336–344 and Lys364 contribute to the ATP site; that span reads LQEGTFGRI. Asp465 functions as the Proton acceptor in the catalytic mechanism. Position 495 is a phosphotyrosine; by autocatalysis (Tyr495).

The protein belongs to the protein kinase superfamily. Tyr protein kinase family. As to quaternary structure, interacts with DVL1 (via PDZ domain). Post-translationally, proteolytically cleaved, in part by presenilin, in response to WNT3 stimulation. Cleavage occurs during neuronal differentiation. Observed in all the tissues examined.

The protein localises to the membrane. The protein resides in the nucleus. It is found in the cytoplasm. It catalyses the reaction L-tyrosyl-[protein] + ATP = O-phospho-L-tyrosyl-[protein] + ADP + H(+). In terms of biological role, may be a coreceptor along with FZD8 of Wnt proteins, such as WNT1, WNT3, WNT3A and WNT5A. Involved in neuron differentiation, axon guidance, corpus callosum establishment and neurite outgrowth. In response to WNT3 stimulation, receptor C-terminal cleavage occurs in its transmembrane region and allows the C-terminal intracellular product to translocate from the cytoplasm to the nucleus where it plays a crucial role in neuronal development. In Homo sapiens (Human), this protein is Tyrosine-protein kinase RYK.